Reading from the N-terminus, the 105-residue chain is Signal peptidase complex subunit 1 (105 aa).

Over 1–32 (MDGMIAMLPAPLQKLSSHIDFQGQKVAERTYQ) the chain is Cytoplasmic. Residues 33-53 (VILTIAGIIGFLVGFWTQQLS) form a helical membrane-spanning segment. Over 54-56 (YAM) the chain is Lumenal. A helical membrane pass occupies residues 57–77 (FTVLGASAFTALIILPPWPFL). The Cytoplasmic segment spans residues 78 to 105 (FRKNPIVWHTPAEPQESGDKKKETKKTK).

The protein belongs to the SPCS1 family. In terms of assembly, component of the signal peptidase complex (SPC) composed of a catalytic subunit sec-11 and three accessory subunits spcs-1, spcs-2 and spcs-3. The complex induces a local thinning of the ER membrane which is used to measure the length of the signal peptide (SP) h-region of protein substrates. This ensures the selectivity of the complex towards h-regions shorter than 18-20 amino acids.

It is found in the endoplasmic reticulum membrane. Functionally, component of the signal peptidase complex (SPC) which catalyzes the cleavage of N-terminal signal sequences from nascent proteins as they are translocated into the lumen of the endoplasmic reticulum. Dispensable for SPC enzymatic activity. In Caenorhabditis elegans, this protein is Signal peptidase complex subunit 1.